The chain runs to 388 residues: Aldolase vrtJ (388 aa).

N6-(pyridoxal phosphate)lysine is present on Lys241.

This sequence belongs to the threonine aldolase family. It depends on pyridoxal 5'-phosphate as a cofactor.

Its pathway is secondary metabolite biosynthesis; terpenoid biosynthesis. Functionally, aldolase; part of the gene cluster that mediates the biosynthesis of viridicatumtoxin, a tetracycline-like fungal meroterpenoid with a unique, fused spirobicyclic ring system. The first step of the pathway is the production of the malonamoyl-CoA starter unit for the polyketide synthase vrtA. The aldolase vrtJ may be involved in the synthesis of the malonamate substrate for malonamoyl-CoA synthetase vrtB. The polyketide synthase vrtA then may utilize the malonamoyl-CoA starter unit, followed by sequential condensation of eight malonyl-CoA units to form the polyketide backbone. The cyclization of the last ring could be mediated by the lactamase-like protein vrtG. The proposed post-PKS tailoring steps are a hydroxylation at C5 catalyzed the cytochrome P450 monooxygenase vrtE, a hydroxylation at C12a catalyzed by VrtH and/or VrtI, and an O-methylation by the O-methyltransferase vrtF. VrtC is then proposed to catalyze the transfer of a geranyl group synthesized by vrtD to the aromatic C ring of the tetracyclic polyketide intermediate of viridicatumtoxin to yield previridicatumtoxin. Finally, the cytochrome P450 monooxygenase vrtK catalyzes the spirocyclization of the geranyl moiety of previridicatumtoxin to afford viridicatumtoxin. This Penicillium aethiopicum protein is Aldolase vrtJ.